We begin with the raw amino-acid sequence, 56 residues long: Large ribosomal subunit protein bL32 (56 aa).

The interval Met-1 to Gly-34 is disordered.

Belongs to the bacterial ribosomal protein bL32 family.

The chain is Large ribosomal subunit protein bL32 from Sodalis glossinidius (strain morsitans).